We begin with the raw amino-acid sequence, 434 residues long: Zinc finger CCCH domain-containing protein 10 (434 aa).

Residues 1–37 form a disordered region; sequence MPDRDSYANGTGSSGGGPGGGGSEEASGAGVGSGGAS. Gly residues predominate over residues 12–35; it reads GSSGGGPGGGGSEEASGAGVGSGG. 3 C3H1-type zinc fingers span residues 36-63, 73-99, and 134-161; these read ASSD…HPDM, KNEF…HGSK, and KEEV…HLQR. R185 and R186 each carry omega-N-methylarginine. Over residues 196 to 207 the composition is skewed to basic and acidic residues; it reads PDRGFEDHEPGP. Residues 196–217 are disordered; sequence PDRGFEDHEPGPKRRRGGCCPP. Residues 234 to 280 adopt a coiled-coil conformation; that stretch reads GVECRLLEEENAMLRKRVEELKKQVSNLLATNEVLLEQNAQFRNQAK. Over residues 314–330 the composition is skewed to polar residues; the sequence is TTLSSQALQPRPVSQQE. Residues 314–362 are disordered; the sequence is TTLSSQALQPRPVSQQELVAPAGAPAAPPTNAAPPAAPPPPPPHLTPEI. Pro residues predominate over residues 339 to 358; it reads AAPPTNAAPPAAPPPPPPHL.

It is found in the nucleus. Functionally, specific regulator of miRNA biogenesis. Binds, via the C3H1-type zinc finger domains, to the binding motif 5'-GCAGCGC-3' on microRNA pri-MIR143 and negatively regulates the processing to mature microRNA. This Homo sapiens (Human) protein is Zinc finger CCCH domain-containing protein 10 (ZC3H10).